The primary structure comprises 365 residues: 2-aminoethylphosphonate--pyruvate transaminase (365 aa).

Lysine 194 carries the N6-(pyridoxal phosphate)lysine modification.

It belongs to the class-V pyridoxal-phosphate-dependent aminotransferase family. PhnW subfamily. In terms of assembly, homodimer. It depends on pyridoxal 5'-phosphate as a cofactor.

The enzyme catalyses (2-aminoethyl)phosphonate + pyruvate = phosphonoacetaldehyde + L-alanine. Functionally, involved in phosphonate degradation. The sequence is that of 2-aminoethylphosphonate--pyruvate transaminase from Bacillus thuringiensis subsp. konkukian (strain 97-27).